The following is a 350-amino-acid chain: Small ribosomal subunit biogenesis GTPase RsgA (350 aa).

Over residues 1 to 17 (MSKNKLSKGQQRRVNAN) the composition is skewed to polar residues. Positions 1–33 (MSKNKLSKGQQRRVNANHQRRLKTSKEKPDYDD) are disordered. In terms of domain architecture, CP-type G spans 104–273 (TSVLTRPDFY…VIDSPGVREF (170 aa)). GTP contacts are provided by residues 160-163 (NKID) and 214-222 (GQSGVGKSS). Cys297, Cys302, His304, and Cys310 together coordinate Zn(2+).

Belongs to the TRAFAC class YlqF/YawG GTPase family. RsgA subfamily. Monomer. Associates with 30S ribosomal subunit, binds 16S rRNA. It depends on Zn(2+) as a cofactor.

Its subcellular location is the cytoplasm. Its function is as follows. One of several proteins that assist in the late maturation steps of the functional core of the 30S ribosomal subunit. Helps release RbfA from mature subunits. May play a role in the assembly of ribosomal proteins into the subunit. Circularly permuted GTPase that catalyzes slow GTP hydrolysis, GTPase activity is stimulated by the 30S ribosomal subunit. In Shigella boydii serotype 18 (strain CDC 3083-94 / BS512), this protein is Small ribosomal subunit biogenesis GTPase RsgA.